Consider the following 348-residue polypeptide: Anthranilate phosphoribosyltransferase (348 aa).

5-phospho-alpha-D-ribose 1-diphosphate contacts are provided by residues Gly91, 94–95, Thr99, 101–104, 119–127, and Ser131; these read GD, NIST, and KHGNRSASG. Gly91 is an anthranilate binding site. Residue Ser103 coordinates Mg(2+). Asn122 is a binding site for anthranilate. Arg177 contributes to the anthranilate binding site. Positions 236 and 237 each coordinate Mg(2+).

Belongs to the anthranilate phosphoribosyltransferase family. In terms of assembly, homodimer. Requires Mg(2+) as cofactor.

The catalysed reaction is N-(5-phospho-beta-D-ribosyl)anthranilate + diphosphate = 5-phospho-alpha-D-ribose 1-diphosphate + anthranilate. The protein operates within amino-acid biosynthesis; L-tryptophan biosynthesis; L-tryptophan from chorismate: step 2/5. Catalyzes the transfer of the phosphoribosyl group of 5-phosphorylribose-1-pyrophosphate (PRPP) to anthranilate to yield N-(5'-phosphoribosyl)-anthranilate (PRA). In Synechococcus sp. (strain ATCC 27144 / PCC 6301 / SAUG 1402/1) (Anacystis nidulans), this protein is Anthranilate phosphoribosyltransferase.